Here is a 260-residue protein sequence, read N- to C-terminus: Vesicle-associated membrane protein/synaptobrevin-binding protein (260 aa).

The Cytoplasmic portion of the chain corresponds to 1-238 (MASHEQALIL…SPAPAAAVRA (238 aa)). Residues 7-125 (ALILEPAGEL…MDTKLRCVFE (119 aa)) form the MSP domain. Positions 127–177 (PDGSHQAPASDASRATDAGAHFSESALEDPTVASRKTETQSPKRVGAVGSA) are disordered. A coiled-coil region spans residues 172 to 216 (GAVGSAGEDVKKLQHELKKAQSEITSLKGENSQLKDEGIRLRKVA). Residues 239 to 259 (FPPVVYVVAAIILGLIIGKFL) traverse the membrane as a helical; Anchor for type IV membrane protein segment.

This sequence belongs to the VAMP-associated protein (VAP) (TC 9.B.17) family. As to expression, detected only in the central nervous system and the gill of aplysia.

It is found in the membrane. The protein localises to the synapse. It localises to the synaptosome. In terms of biological role, required for neurotransmitter release. Interacts with VAMP. The chain is Vesicle-associated membrane protein/synaptobrevin-binding protein from Aplysia californica (California sea hare).